Here is a 1770-residue protein sequence, read N- to C-terminus: Transposon Ty2-OR2 Gag-Pol polyprotein (1770 aa).

2 disordered regions span residues 1–88 (MESQ…YQQH) and 359–449 (QHSE…SNDE). Composition is skewed to polar residues over residues 19-39 (ASVT…SASN) and 49-60 (KVNSQEETTPGT). Residues 295–397 (ENNINVSDRL…SSKPRAAKAH (103 aa)) form an RNA-binding region. The span at 369-381 (TSPNTTNTKVTTR) shows a compositional bias: low complexity. 2 stretches are compositionally biased toward polar residues: residues 399–408 (IATSSKFSRV) and 415–435 (ESTV…GQQQ). The active-site For protease activity; shared with dimeric partner is the D457. Residues 579–636 (NVNKSKSVNKYPYPLIHRMLGHANFRSIQKSLKKNAVTYLKESDIEWSNASTYQCPDC) are integrase-type zinc finger-like. In terms of domain architecture, Integrase catalytic spans 656 to 831 (ESYEPFQYLH…AGLDITTILP (176 aa)). Mg(2+) is bound by residues D667 and D732. Disordered regions lie at residues 1005–1038 (GGTI…MIDL), 1057–1135 (GGTE…KSSK), 1146–1165 (LPLP…VSKD), and 1170–1205 (HSRQ…TEIE). Polar residues-rich tracts occupy residues 1009–1024 (ESDT…FTAR) and 1065–1082 (QRNS…STPS). A compositionally biased stretch (basic and acidic residues) spans 1151 to 1165 (LTHKSPTDTSDVSKD). A Bipartite nuclear localization signal motif is present at residues 1193-1227 (KKRSLEDNETEIEVSRDTWNNKNMRSLEPPRSKKR). The region spanning 1353 to 1491 (NDYYITQLDI…DILGLEIKYQ (139 aa)) is the Reverse transcriptase Ty1/copia-type domain. Residues D1361, D1442, D1443, D1625, E1667, and D1700 each coordinate Mg(2+). Residues 1625–1767 (DASYGNQPYY…IKTFKLLTNK (143 aa)) form the RNase H Ty1/copia-type domain.

As to quaternary structure, the capsid protein forms a homotrimer, from which the VLPs are assembled. The protease is a homodimer, whose active site consists of two apposed aspartic acid residues. Initially, virus-like particles (VLPs) are composed of the structural unprocessed proteins Gag and Gag-Pol, and also contain the host initiator methionine tRNA (tRNA(i)-Met) which serves as a primer for minus-strand DNA synthesis, and a dimer of genomic Ty RNA. Processing of the polyproteins occurs within the particle and proceeds by an ordered pathway, called maturation. First, the protease (PR) is released by autocatalytic cleavage of the Gag-Pol polyprotein, and this cleavage is a prerequisite for subsequent processing at the remaining sites to release the mature structural and catalytic proteins. Maturation takes place prior to the RT reaction and is required to produce transposition-competent VLPs.

It localises to the cytoplasm. It is found in the nucleus. The catalysed reaction is DNA(n) + a 2'-deoxyribonucleoside 5'-triphosphate = DNA(n+1) + diphosphate. The enzyme catalyses Endonucleolytic cleavage to 5'-phosphomonoester.. Functionally, capsid protein (CA) is the structural component of the virus-like particle (VLP), forming the shell that encapsulates the retrotransposons dimeric RNA genome. The particles are assembled from trimer-clustered units and there are holes in the capsid shells that allow for the diffusion of macromolecules. CA also has nucleocapsid-like chaperone activity, promoting primer tRNA(i)-Met annealing to the multipartite primer-binding site (PBS), dimerization of Ty2 RNA and initiation of reverse transcription. Its function is as follows. The aspartyl protease (PR) mediates the proteolytic cleavages of the Gag and Gag-Pol polyproteins after assembly of the VLP. In terms of biological role, reverse transcriptase/ribonuclease H (RT) is a multifunctional enzyme that catalyzes the conversion of the retro-elements RNA genome into dsDNA within the VLP. The enzyme displays a DNA polymerase activity that can copy either DNA or RNA templates, and a ribonuclease H (RNase H) activity that cleaves the RNA strand of RNA-DNA heteroduplexes during plus-strand synthesis and hydrolyzes RNA primers. The conversion leads to a linear dsDNA copy of the retrotransposon that includes long terminal repeats (LTRs) at both ends. Integrase (IN) targets the VLP to the nucleus, where a subparticle preintegration complex (PIC) containing at least integrase and the newly synthesized dsDNA copy of the retrotransposon must transit the nuclear membrane. Once in the nucleus, integrase performs the integration of the dsDNA into the host genome. This Saccharomyces cerevisiae (strain ATCC 204508 / S288c) (Baker's yeast) protein is Transposon Ty2-OR2 Gag-Pol polyprotein (TY2B-OR2).